A 195-amino-acid chain; its full sequence is Imidazoleglycerol-phosphate dehydratase (195 aa).

This sequence belongs to the imidazoleglycerol-phosphate dehydratase family.

It localises to the cytoplasm. It catalyses the reaction D-erythro-1-(imidazol-4-yl)glycerol 3-phosphate = 3-(imidazol-4-yl)-2-oxopropyl phosphate + H2O. It functions in the pathway amino-acid biosynthesis; L-histidine biosynthesis; L-histidine from 5-phospho-alpha-D-ribose 1-diphosphate: step 6/9. This chain is Imidazoleglycerol-phosphate dehydratase, found in Geobacter sulfurreducens (strain ATCC 51573 / DSM 12127 / PCA).